A 2548-amino-acid chain; its full sequence is Variant-silencing SET domain-containing protein (2548 aa).

The span at 37 to 48 shows a compositional bias: acidic residues; that stretch reads IDDDDDDDNDNN. Disordered stretches follow at residues 37-61, 336-379, and 585-629; these read IDDDDDDDNDNNEEPKEMNINKTNN, GDPK…DDDN, and SVDR…NTQT. The span at 336-357 shows a compositional bias: basic and acidic residues; it reads GDPKKRIERNKQEIEDHRREQD. The span at 358–378 shows a compositional bias: acidic residues; the sequence is GENDQEEDNYDDYDDEDDDDD. Over residues 602-616 the composition is skewed to low complexity; the sequence is NGSNNNNSSSNNNNN. The span at 617 to 629 shows a compositional bias: polar residues; the sequence is ITHITNDCDNTQT. Residues 787-846 form a PHD-type 1 zinc finger; the sequence is FYLCEFCEQNIFDMNNMIKKDKAKECMYRCNISCGRTFHKACVCYIKNNDNYICFFCLYD. Over residues 929-944 the composition is skewed to basic residues; that stretch reads IKRRHIYRKRRRRGPR. Disordered stretches follow at residues 929-1054, 1546-1575, 1713-1732, and 1772-1822; these read IKRR…CDEN, EKNTKNKLCNNDNNNNNNNKGKNTKYNTLD, EQGSINNAKHNEQGSINNAK, and INNA…DDHR. Over residues 986 to 1016 the composition is skewed to acidic residues; the sequence is DNNDDNNDNNDDNNDNNDDNNDNNDNNDDNN. Composition is skewed to low complexity over residues 1017–1050 and 1551–1572; these read NDNNNNNNNDNNDNNNNNNNNNNNNDNDNNNNNN and NKLCNNDNNNNNNNKGKNTKYN. Over residues 1714–1732 the composition is skewed to polar residues; it reads QGSINNAKHNEQGSINNAK. Residues 2067 to 2117 form the AWS domain; the sequence is SDDYKCLCQGECNLYTCYNSLSNIQCSKSRCNLPEKIQDRKCFNRPFRKSF. Positions 2119–2240 constitute an SET domain; the sequence is KDLEIKKTEK…SGEEITYNYS (122 aa). Tyr2239 is a binding site for S-adenosyl-L-methionine. A PHD-type 2 zinc finger spans residues 2423 to 2471; that stretch reads DEVCRKCKSCGNLTMCDKCFQSYHQLCGNMHSKMYKNNELVLCRFCQKY.

Belongs to the class V-like SAM-binding methyltransferase superfamily.

Its subcellular location is the nucleus. The protein resides in the chromosome. The catalysed reaction is L-lysyl(36)-[histone H3] + 3 S-adenosyl-L-methionine = N(6),N(6),N(6)-trimethyl-L-lysyl(36)-[histone H3] + 3 S-adenosyl-L-homocysteine + 3 H(+). Its function is as follows. Histone methyltransferase that specifically represses expression of the surface antigen-coding var genes by mediating trimethylation of 'Lys-36' of histone H3 (H3K36me3) on var genes. SETVS-dependent H3K36me3 is specifically involved in var genes silencing, a central step malaria pathogenesis: each parasite contains 60 distinct var genes that each code for a different PfEMP1 protein. During infection, the clonal parasite population expresses only 1 gene at a time, while the 59 other var genes are silenced. The parasite then switches to the expression of a new variant antigen as an immune-evasion mechanism to avoid the host antibody response. Represses expression of both var mRNA and antisense long non-coding RNA. The sequence is that of Variant-silencing SET domain-containing protein (SETVS) from Plasmodium falciparum (isolate 3D7).